We begin with the raw amino-acid sequence, 434 residues long: Glutamate-1-semialdehyde 2,1-aminomutase 2 (434 aa).

Residue Lys-270 is modified to N6-(pyridoxal phosphate)lysine.

It belongs to the class-III pyridoxal-phosphate-dependent aminotransferase family. HemL subfamily. Homodimer. The cofactor is pyridoxal 5'-phosphate.

The protein resides in the cytoplasm. The catalysed reaction is (S)-4-amino-5-oxopentanoate = 5-aminolevulinate. It participates in porphyrin-containing compound metabolism; protoporphyrin-IX biosynthesis; 5-aminolevulinate from L-glutamyl-tRNA(Glu): step 2/2. The chain is Glutamate-1-semialdehyde 2,1-aminomutase 2 from Bacillus cereus (strain G9842).